The chain runs to 319 residues: tRNA uridine(34) hydroxylase (319 aa).

Positions 124–218 constitute a Rhodanese domain; sequence LDEDTVILDA…YGKNEETKGE (95 aa). The Cysteine persulfide intermediate role is filled by cysteine 178.

This sequence belongs to the TrhO family.

The enzyme catalyses uridine(34) in tRNA + AH2 + O2 = 5-hydroxyuridine(34) in tRNA + A + H2O. Functionally, catalyzes oxygen-dependent 5-hydroxyuridine (ho5U) modification at position 34 in tRNAs. This is tRNA uridine(34) hydroxylase from Listeria monocytogenes serovar 1/2a (strain ATCC BAA-679 / EGD-e).